Here is a 110-residue protein sequence, read N- to C-terminus: UPF0339 protein YegP (110 aa).

2 tandem repeats follow at residues 10-58 (SSDS…RYEK) and 61-109 (ASNG…VKDN).

The protein belongs to the UPF0339 family. Duplicated subfamily.

In Escherichia coli O157:H7, this protein is UPF0339 protein YegP (yegP).